A 446-amino-acid polypeptide reads, in one-letter code: Phosphoglucosamine mutase (446 aa).

The active-site Phosphoserine intermediate is S103. Mg(2+) is bound by residues S103, D242, D244, and D246. At S103 the chain carries Phosphoserine.

Belongs to the phosphohexose mutase family. Requires Mg(2+) as cofactor. Post-translationally, activated by phosphorylation.

It carries out the reaction alpha-D-glucosamine 1-phosphate = D-glucosamine 6-phosphate. Catalyzes the conversion of glucosamine-6-phosphate to glucosamine-1-phosphate. The sequence is that of Phosphoglucosamine mutase from Vibrio campbellii (strain ATCC BAA-1116).